The primary structure comprises 504 residues: UDP-N-acetylmuramoylalanine--D-glutamate ligase (504 aa).

129–135 (GTNGKTT) is a binding site for ATP.

The protein belongs to the MurCDEF family.

It localises to the cytoplasm. It carries out the reaction UDP-N-acetyl-alpha-D-muramoyl-L-alanine + D-glutamate + ATP = UDP-N-acetyl-alpha-D-muramoyl-L-alanyl-D-glutamate + ADP + phosphate + H(+). It functions in the pathway cell wall biogenesis; peptidoglycan biosynthesis. Cell wall formation. Catalyzes the addition of glutamate to the nucleotide precursor UDP-N-acetylmuramoyl-L-alanine (UMA). This chain is UDP-N-acetylmuramoylalanine--D-glutamate ligase, found in Burkholderia thailandensis (strain ATCC 700388 / DSM 13276 / CCUG 48851 / CIP 106301 / E264).